The primary structure comprises 260 residues: MAKEWGYASHNGPDHWHELYPIAKGDNQSPIELHTKDIKHDPSLQPWSASYDPGSAKTILNNGKTCRVVFDDTYDRSMLRGGPLSGPYRLRQFHLHWGSSDDHGSEHTVDGVKYAAELHLVHWNPKYNTFGEALKQPDGIAVVGIFLKIGREKGEFQILLDALDKIKTKGKEAPFTHFDPSCLFPACRDYWTYHGSFTTPPCEECIVWLLLKEPMTVSSDQMAKLRSLFSSAENEPPVPLVGNWRPPQPVKGRVVRASFK.

Ala-2 is modified (N-acetylalanine). Residues 3–259 enclose the Alpha-carbonic anhydrase domain; sequence KEWGYASHNG…VKGRVVRASF (257 aa). A phosphoserine mark is found at Ser-29, Ser-43, Ser-48, Ser-50, and Ser-55. The involved in proton transfer stretch occupies residues 64-67; it reads KTCR. Thr-73 carries the post-translational modification Phosphothreonine. Residues His-94, His-96, and His-119 each coordinate Zn(2+). Tyr-127 bears the Phosphotyrosine mark. Phosphothreonine is present on residues Thr-129 and Thr-176. S-glutathionyl cysteine occurs at positions 182 and 187. Residue 198-199 participates in substrate binding; that stretch reads TT. Thr-216 bears the Phosphothreonine mark. At Ser-219 the chain carries Phosphoserine.

This sequence belongs to the alpha-carbonic anhydrase family. Requires Zn(2+) as cofactor. In terms of processing, S-thiolated both by thiol-disulfide exchange with glutathione disulfide and by oxyradical-initiated S-thiolation with reduced glutathione. Post-translationally, S-glutathionylated in hepatocytes under oxidative stress. Expressed at lower levels in adipose tissue from animals that were either genetically obese or had experimentally induced obesity.

The protein localises to the cytoplasm. It carries out the reaction hydrogencarbonate + H(+) = CO2 + H2O. Its activity is regulated as follows. Inhibited by acetazolamide. Reversible hydration of carbon dioxide. The chain is Carbonic anhydrase 3 from Mus musculus (Mouse).